The chain runs to 484 residues: Glutamyl-tRNA(Gln) amidotransferase subunit A (484 aa).

Residues K77 and S152 each act as charge relay system in the active site. Residue S176 is the Acyl-ester intermediate of the active site.

It belongs to the amidase family. GatA subfamily. In terms of assembly, heterotrimer of A, B and C subunits.

The enzyme catalyses L-glutamyl-tRNA(Gln) + L-glutamine + ATP + H2O = L-glutaminyl-tRNA(Gln) + L-glutamate + ADP + phosphate + H(+). Functionally, allows the formation of correctly charged Gln-tRNA(Gln) through the transamidation of misacylated Glu-tRNA(Gln) in organisms which lack glutaminyl-tRNA synthetase. The reaction takes place in the presence of glutamine and ATP through an activated gamma-phospho-Glu-tRNA(Gln). The protein is Glutamyl-tRNA(Gln) amidotransferase subunit A of Pseudomonas aeruginosa (strain ATCC 15692 / DSM 22644 / CIP 104116 / JCM 14847 / LMG 12228 / 1C / PRS 101 / PAO1).